The chain runs to 203 residues: N-(5'-phosphoribosyl)anthranilate isomerase (203 aa).

This sequence belongs to the TrpF family.

The enzyme catalyses N-(5-phospho-beta-D-ribosyl)anthranilate = 1-(2-carboxyphenylamino)-1-deoxy-D-ribulose 5-phosphate. The protein operates within amino-acid biosynthesis; L-tryptophan biosynthesis; L-tryptophan from chorismate: step 3/5. The polypeptide is N-(5'-phosphoribosyl)anthranilate isomerase (Sulfurihydrogenibium sp. (strain YO3AOP1)).